The sequence spans 459 residues: tRNA modification GTPase MnmE (459 aa).

Residues R22, E85, and R124 each contribute to the (6S)-5-formyl-5,6,7,8-tetrahydrofolate site. The 160-residue stretch at 221–380 folds into the TrmE-type G domain; the sequence is GLSTVIVGKP…LEIQIRDLFF (160 aa). N231 lines the K(+) pocket. GTP contacts are provided by residues 231-236, 250-256, and 275-278; these read NVGKSS, TEVAGTT, and DTAG. Residue S235 coordinates Mg(2+). Residues T250, V252, and T255 each coordinate K(+). T256 provides a ligand contact to Mg(2+). K459 provides a ligand contact to (6S)-5-formyl-5,6,7,8-tetrahydrofolate.

The protein belongs to the TRAFAC class TrmE-Era-EngA-EngB-Septin-like GTPase superfamily. TrmE GTPase family. As to quaternary structure, homodimer. Heterotetramer of two MnmE and two MnmG subunits. K(+) serves as cofactor.

The protein localises to the cytoplasm. Functionally, exhibits a very high intrinsic GTPase hydrolysis rate. Involved in the addition of a carboxymethylaminomethyl (cmnm) group at the wobble position (U34) of certain tRNAs, forming tRNA-cmnm(5)s(2)U34. This Staphylococcus aureus (strain USA300 / TCH1516) protein is tRNA modification GTPase MnmE.